The primary structure comprises 850 residues: Response regulator sskA (850 aa).

Disordered regions lie at residues 1 to 225 (MPDR…GASS) and 419 to 542 (IPQR…GQSP). Over residues 7–25 (SQLLKSKLLRRSSTTATTS) the composition is skewed to low complexity. Residues 117-138 (GANSRQEGSQNGSIQQSPTFTR) show a composition bias toward polar residues. The span at 144–163 (QLTEEKDKGKLQSREGDQRG) shows a compositional bias: basic and acidic residues. Residues 177–196 (SDPQYSLTTELANKPSTPQT) are compositionally biased toward polar residues. Over residues 436 to 445 (HHSEPGEHGE) the composition is skewed to basic and acidic residues. Residues 477–490 (PSISILTTDSNMAS) show a composition bias toward polar residues. Residues 492–511 (PQPPVAAPQVPTPPGPPPES) show a composition bias toward pro residues. Residues 558-719 (NVLIVEDNII…WLEQKVTEWG (162 aa)) form the Response regulatory domain. At aspartate 607 the chain carries 4-aspartylphosphate. The disordered stretch occupies residues 736-850 (FADEPQSSSP…DEEQQALDAT (115 aa)). Low complexity predominate over residues 762–782 (SSRTSTSPSSAAVNATARAFA). Residues 819–828 (TLDSPASPLT) are compositionally biased toward polar residues. Residues 839 to 850 (PGDEEQQALDAT) show a composition bias toward acidic residues.

Belongs to the SSK1 family.

The protein localises to the cytoplasm. In terms of biological role, final receptor of the osmolarity two-component system regulatory system, which controls activity of the sakA mitogen-activated protein kinase (MAPK) pathway in response to changes in the osmolarity of the extracellular environment. Regulates the germination in the airways that drives enhanced disease initiation and inflammation in the lungs. The protein is Response regulator sskA of Aspergillus fumigatus (strain ATCC MYA-4609 / CBS 101355 / FGSC A1100 / Af293) (Neosartorya fumigata).